Reading from the N-terminus, the 222-residue chain is MPSLSKEAALVHDALVARGLETPLRPPMDELDNETRKSLIAGHMTEIMQLLNLDLSDDSLMETPHRIAKMYVDEIFAGLDYANFPKITLIENKMKVDEMVTVRDITLTSTCEHHFVTIDGKATVAYIPKDSVIGLSKINRIVQFFAQRPQVQERLTQQILTVLQTLLGTNNVAVSIDAVHYCVKARGIRDATSATTTTSLGGLFKSSQNTRQEFLRAVRHHP.

Zn(2+)-binding residues include cysteine 111, histidine 114, and cysteine 182.

Belongs to the GTP cyclohydrolase I family. In terms of assembly, toroid-shaped homodecamer, composed of two pentamers of five dimers.

The catalysed reaction is GTP + H2O = 7,8-dihydroneopterin 3'-triphosphate + formate + H(+). Its pathway is cofactor biosynthesis; 7,8-dihydroneopterin triphosphate biosynthesis; 7,8-dihydroneopterin triphosphate from GTP: step 1/1. The protein is GTP cyclohydrolase 1 of Salmonella choleraesuis (strain SC-B67).